The chain runs to 722 residues: Exocyst complex component 3-like protein 4 (722 aa).

2 disordered regions span residues 1–53 (MPSP…LGSL) and 92–131 (NDGP…KPEA). Residues 34-46 (SRKEPNAHRKDGT) show a composition bias toward basic and acidic residues. Ser-52 carries the post-translational modification Phosphoserine. Residues 113–122 (GVSQQASTGA) are compositionally biased toward polar residues. The residue at position 513 (Ser-513) is a Phosphoserine.

The protein belongs to the SEC6 family.

The sequence is that of Exocyst complex component 3-like protein 4 (EXOC3L4) from Homo sapiens (Human).